A 90-amino-acid polypeptide reads, in one-letter code: Probable Fe(2+)-trafficking protein (90 aa).

The protein belongs to the Fe(2+)-trafficking protein family.

Could be a mediator in iron transactions between iron acquisition and iron-requiring processes, such as synthesis and/or repair of Fe-S clusters in biosynthetic enzymes. The chain is Probable Fe(2+)-trafficking protein from Vibrio parahaemolyticus serotype O3:K6 (strain RIMD 2210633).